The following is a 509-amino-acid chain: Cobyric acid synthase (509 aa).

A GATase cobBQ-type domain is found at E262–W459. C343 acts as the Nucleophile in catalysis. Residue H451 is part of the active site.

The protein belongs to the CobB/CobQ family. CobQ subfamily.

The protein operates within cofactor biosynthesis; adenosylcobalamin biosynthesis. Catalyzes amidations at positions B, D, E, and G on adenosylcobyrinic A,C-diamide. NH(2) groups are provided by glutamine, and one molecule of ATP is hydrogenolyzed for each amidation. In Prochlorococcus marinus (strain MIT 9301), this protein is Cobyric acid synthase.